The sequence spans 267 residues: Ribosomal RNA small subunit methyltransferase A (267 aa).

Residues asparagine 12, isoleucine 14, glycine 39, glutamate 60, aspartate 84, and asparagine 110 each coordinate S-adenosyl-L-methionine.

The protein belongs to the class I-like SAM-binding methyltransferase superfamily. rRNA adenine N(6)-methyltransferase family. RsmA subfamily.

It localises to the cytoplasm. It catalyses the reaction adenosine(1518)/adenosine(1519) in 16S rRNA + 4 S-adenosyl-L-methionine = N(6)-dimethyladenosine(1518)/N(6)-dimethyladenosine(1519) in 16S rRNA + 4 S-adenosyl-L-homocysteine + 4 H(+). Functionally, specifically dimethylates two adjacent adenosines (A1518 and A1519) in the loop of a conserved hairpin near the 3'-end of 16S rRNA in the 30S particle. May play a critical role in biogenesis of 30S subunits. The protein is Ribosomal RNA small subunit methyltransferase A of Mesoplasma florum (strain ATCC 33453 / NBRC 100688 / NCTC 11704 / L1) (Acholeplasma florum).